The following is a 423-amino-acid chain: Aspartic protease-like protein pytH (423 aa).

Positions 1-16 (MWLSVALLTLLDGALA) are cleaved as a signal peptide. Residues 38–416 (TTDAIQIGTP…DFDKLRVGLA (379 aa)) form the Peptidase A1 domain. Asp-56 is an active-site residue. N-linked (GlcNAc...) asparagine glycans are attached at residues Asn-88, Asn-97, Asn-168, Asn-196, Asn-231, and Asn-279. The active site involves Asp-291. Asn-330 is a glycosylation site (N-linked (GlcNAc...) asparagine). A disulfide bond links Cys-338 and Cys-377.

The protein belongs to the peptidase A1 family.

Its pathway is secondary metabolite biosynthesis. Its function is as follows. Aspartic protease-like protein; part of the gene cluster that mediates the biosynthesis of pyranterreones, a family of antioxidative compounds. The first step of pyranonigrins biosynthesis is performed by the hybrid PKS-NRPS synthetase pytA that condenses 4 malonyl-CoA units ato the acetyl starter unit by the modular PKS of pytA. The acyl chain is then connected to an L-serine through the amide bond by the modular NRPS of pytA. A tetramic acid is formed and released from the PKS-NRPS pytA to give pyranterreone 5 with the help of the thioesterase pytI. Pyranterreone 5 could be methylated by pytC to afford pyranterreone 6. Both pyranterreones 5 and 6 are subsequently oxidized by the FAD-linked oxidoreductase pytB and the cytochrome P450 monooxygenase pytD to form the fused gamma-pyrone core, resulting in pyranterreones 7 and 11, respectively. The hydroxy group at C-8 of pyranterreones 7 and 11 are dehydrated by the aspartyl protease pytH to form a delta-7 double bond to give pyranterreones 3 and 1, 2 accordingly. The exo-methylene of pyranterreone 3 could be reduced into a pendant methyl by reductase pytE to provide pyranterreone 4, also known as cordylactam. Pyranterreone 4 can be reconverted to pyranterreone 3 through pytB-catalyzed dehydrogenation or further oxidized to pyranterreones 9 and 10. This is Aspartic protease-like protein pytH from Aspergillus terreus (strain NIH 2624 / FGSC A1156).